The chain runs to 282 residues: MKFSTILTGSLFATAALAAPLTEKRRARKEARAAGKRHSNPPYIPGSDKEILKLNGTTNEEYSSNWAGAVLIGDGYTKVTGEFTVPSVSAGSSGSSGYGGGYGYWKNKRQSEEYCASAWVGIDGDTCETAILQTGVDFCYEDGQTSYDAWYEWYPDYAYDFSDITISEGDSIKVTVEATSKSSGSATVENLTTGQSVTHTFSGNVEGDLCETNAEWIVEDFESGDSLVAFADFGSVTFTNAEATSGGSTVGPSDATVMDIEQDGSVLTETSVSGDSVTVTYV.

The N-terminal stretch at 1–18 (MKFSTILTGSLFATAALA) is a signal peptide. Propeptides lie at residues 19 to 59 (APLT…GTTN) and 99 to 109 (GGGYGYWKNKR). Over residues 27-39 (ARKEARAAGKRHS) the composition is skewed to basic residues. The segment at 27–46 (ARKEARAAGKRHSNPPYIPG) is disordered. Gln110 is modified (pyrrolidone carboxylic acid). Intrachain disulfides connect Cys115-Cys139 and Cys127-Cys210.

This sequence belongs to the peptidase G1 family. In terms of assembly, heterodimer of two noncovalently bound light and heavy chains.

It catalyses the reaction Preferential cleavage in B chain of insulin: 3-Asn-|-Gln-4, 13-Gly-|-Ala-14, and 26-Tyr-|-Thr-27.. The polypeptide is Aspergillopepsin-2 (Aspergillus niger).